The primary structure comprises 334 residues: Ferrochelatase 1 (334 aa).

Fe cation is bound by residues histidine 201 and glutamate 282.

It belongs to the ferrochelatase family.

The protein resides in the cytoplasm. It carries out the reaction heme b + 2 H(+) = protoporphyrin IX + Fe(2+). It participates in porphyrin-containing compound metabolism; protoheme biosynthesis; protoheme from protoporphyrin-IX: step 1/1. Functionally, catalyzes the ferrous insertion into protoporphyrin IX. This is Ferrochelatase 1 from Shewanella oneidensis (strain ATCC 700550 / JCM 31522 / CIP 106686 / LMG 19005 / NCIMB 14063 / MR-1).